We begin with the raw amino-acid sequence, 486 residues long: Ribulose bisphosphate carboxylase large chain 1 (486 aa).

Substrate is bound by residues Asn-125 and Thr-175. Lys-177 acts as the Proton acceptor in catalysis. Residue Lys-179 coordinates substrate. Mg(2+) is bound by residues Lys-203, Asp-205, and Glu-206. Position 203 is an N6-carboxylysine (Lys-203). The Proton acceptor role is filled by His-295. Substrate contacts are provided by Arg-296, His-328, and Ser-380.

Belongs to the RuBisCO large chain family. Type I subfamily. Heterohexadecamer of 8 large chains and 8 small chains. Mg(2+) is required as a cofactor.

The catalysed reaction is 2 (2R)-3-phosphoglycerate + 2 H(+) = D-ribulose 1,5-bisphosphate + CO2 + H2O. It catalyses the reaction D-ribulose 1,5-bisphosphate + O2 = 2-phosphoglycolate + (2R)-3-phosphoglycerate + 2 H(+). RuBisCO catalyzes two reactions: the carboxylation of D-ribulose 1,5-bisphosphate, the primary event in carbon dioxide fixation, as well as the oxidative fragmentation of the pentose substrate. Both reactions occur simultaneously and in competition at the same active site. The polypeptide is Ribulose bisphosphate carboxylase large chain 1 (Bradyrhizobium sp. (strain ORS 278)).